The chain runs to 102 residues: UPF0473 protein SAS1551 (102 aa).

The protein belongs to the UPF0473 family.

The chain is UPF0473 protein SAS1551 from Staphylococcus aureus (strain MSSA476).